We begin with the raw amino-acid sequence, 168 residues long: Photosystem I assembly protein Ycf3 (168 aa).

3 TPR repeats span residues 35-68 (AFTY…EIDP), 72-105 (SYIL…NPFL), and 120-153 (GEQA…TPGN).

It belongs to the Ycf3 family.

The protein localises to the plastid. Its subcellular location is the chloroplast thylakoid membrane. Functionally, essential for the assembly of the photosystem I (PSI) complex. May act as a chaperone-like factor to guide the assembly of the PSI subunits. This Daucus carota (Wild carrot) protein is Photosystem I assembly protein Ycf3.